A 649-amino-acid chain; its full sequence is Endoplasmic reticulum membrane protein 65 (649 aa).

The tract at residues 1 to 55 is disordered; the sequence is MGSNTSPGQADPLESENESSLTSRFLPNKRDGGKDNESVIPEKEEPDLNEPVLAV. At 1-165 the chain is on the cytoplasmic side; that stretch reads MGSNTSPGQA…LATPYAIEKT (165 aa). Positions 28–43 are enriched in basic and acidic residues; it reads NKRDGGKDNESVIPEK. The residue at position 94 (Ser-94) is a Phosphoserine. The chain crosses the membrane as a helical span at residues 166–186; it reads FLFGWFVSVDSFLYIFTLFPI. Residues 187-302 are Lumenal-facing; it reads RVLISFFTLS…NFWNPAGWMT (116 aa). N-linked (GlcNAc...) asparagine glycosylation is present at Asn-215. Residues 303–323 form a helical membrane-spanning segment; sequence FFYYFAISLAYMVLHTLVLLY. The Cytoplasmic segment spans residues 324–366; sequence QIITLNVTVNSYSNAVLALLMSNQLVEIKGAVFKKFEKENLFQ. A helical transmembrane segment spans residues 367-387; that stretch reads LTCSDVVERFQITIMVIIIFL. Residues 388–414 lie on the Lumenal side of the membrane; it reads RNLAELYTTSSLDQPLLTFKRLKTLLA. Residues 415–435 traverse the membrane as a helical segment; it reads PFFWVIGSELFVDWLKHAFII. At 436–479 the chain is on the cytoplasmic side; it reads KFNYIKPSIYSRFTDVLCHDYVASGAQLTQTVTGCSQQVARRMG. Residues 480–500 form a helical membrane-spanning segment; it reads LPVLPLVCVFIRTSMQTWSMF. Topologically, residues 501–557 are lumenal; the sequence is RSTHSMKQEIAKSIGTIFPTKDNYVYYLPNKEANTYNAGKEASWETLLLSVVRGKSG. The helical transmembrane segment at 558 to 578 threads the bilayer; that stretch reads IAFLFFMAIMLKLLLGKAILA. Topologically, residues 579-649 are cytoplasmic; the sequence is ITQSRYESMQ…RYAMHSKRIW (71 aa).

The protein belongs to the TAPT1 family. As to quaternary structure, interacts with slp1.

The protein resides in the endoplasmic reticulum membrane. Its function is as follows. May be involved in membrane protein folding. The sequence is that of Endoplasmic reticulum membrane protein 65 from Schizosaccharomyces pombe (strain 972 / ATCC 24843) (Fission yeast).